Consider the following 162-residue polypeptide: Cyanate hydratase (162 aa).

Active-site residues include Arg90, Glu93, and Ser116.

It belongs to the cyanase family.

The catalysed reaction is cyanate + hydrogencarbonate + 3 H(+) = NH4(+) + 2 CO2. Its function is as follows. Catalyzes the reaction of cyanate with bicarbonate to produce ammonia and carbon dioxide. The protein is Cyanate hydratase of Populus trichocarpa (Western balsam poplar).